An 88-amino-acid chain; its full sequence is Small ribosomal subunit protein bS20 (88 aa).

This sequence belongs to the bacterial ribosomal protein bS20 family.

In terms of biological role, binds directly to 16S ribosomal RNA. This chain is Small ribosomal subunit protein bS20, found in Clostridium novyi (strain NT).